Reading from the N-terminus, the 115-residue chain is uncharacterized protein (115 aa).

The next 3 membrane-spanning stretches (helical) occupy residues 10-30 (IAILVFLMVIGFFIFIGSFWL), 47-67 (ASGIILTIFPNINSWFNATVA), and 77-97 (VHFFIPVGFGLLFGLIIAIIV).

The protein resides in the cell membrane. This is an uncharacterized protein from Mycoplasma genitalium (strain ATCC 33530 / DSM 19775 / NCTC 10195 / G37) (Mycoplasmoides genitalium).